The sequence spans 211 residues: Large ribosomal subunit protein uL3 (211 aa).

The protein belongs to the universal ribosomal protein uL3 family. In terms of assembly, part of the 50S ribosomal subunit. Forms a cluster with proteins L14 and L19.

Its function is as follows. One of the primary rRNA binding proteins, it binds directly near the 3'-end of the 23S rRNA, where it nucleates assembly of the 50S subunit. This chain is Large ribosomal subunit protein uL3, found in Halothermothrix orenii (strain H 168 / OCM 544 / DSM 9562).